The chain runs to 653 residues: PAN2-PAN3 deadenylation complex subunit PAN3 (653 aa).

2 disordered regions span residues 1–21 and 45–128; these read MASDSRRGTGSPKMKGRENAK and HDPN…AAPD. The C3H1-type zinc-finger motif lies at 19–48; it reads NAKDTLCRNVTIYGRCRYEDKGCVYNHDPN. Residues 68–95 are compositionally biased toward low complexity; it reads SFTPSLLSSNGSSPTSSSATLKKTTTIS. Residues 108–119 show a composition bias toward polar residues; sequence GISSRSNASTPS. The segment at 256–516 is pseudokinase domain; the sequence is QTLPNTQLPA…TIDIFITGIS (261 aa). Residues R308, 357–364, and 416–417 each bind ATP; these read DYHPLSKT and SK. Positions 517 to 555 form a coiled coil; that stretch reads SQLMSTFDSALHMDDQLTSDLSRELENGRLVRLMTKLNF. The knob domain stretch occupies residues 556 to 653; the sequence is INERPEYEHD…ALLKPTRRVH (98 aa).

It belongs to the protein kinase superfamily. PAN3 family. As to quaternary structure, homodimer. Forms a heterotrimer with a catalytic subunit pan2 to form the poly(A)-nuclease (PAN) deadenylation complex. Interacts (via PAM-2 motif) with poly(A)-binding protein pab1 (via PABC domain), conferring substrate specificity of the enzyme complex.

It is found in the cytoplasm. Functionally, regulatory subunit of the poly(A)-nuclease (PAN) deadenylation complex, one of two cytoplasmic mRNA deadenylases involved in mRNA turnover. PAN specifically shortens poly(A) tails of RNA and the activity is stimulated by poly(A)-binding protein pab1. PAN deadenylation is followed by rapid degradation of the shortened mRNA tails by the CCR4-NOT complex. Deadenylated mRNAs are then degraded by two alternative mechanisms, namely exosome-mediated 3'-5' exonucleolytic degradation, or deadenylation-dependent mRNA decaping and subsequent 5'-3' exonucleolytic degradation by xrn1. May also be involved in post-transcriptional maturation of mRNA poly(A) tails. pan3 acts as a positive regulator for PAN activity, recruiting the catalytic subunit pan2 to mRNA via its interaction with RNA and with pab1. The sequence is that of PAN2-PAN3 deadenylation complex subunit PAN3 from Aspergillus terreus (strain NIH 2624 / FGSC A1156).